The primary structure comprises 107 residues: Iron-sulfur cluster assembly protein CyaY (107 aa).

The protein belongs to the frataxin family.

In terms of biological role, involved in iron-sulfur (Fe-S) cluster assembly. May act as a regulator of Fe-S biogenesis. This Yersinia pseudotuberculosis serotype O:1b (strain IP 31758) protein is Iron-sulfur cluster assembly protein CyaY.